Consider the following 574-residue polypeptide: Sulfate adenylyltransferase (574 aa).

The interval 1–169 (MANSPHGGVL…IEAVNKLNHY (169 aa)) is N-terminal. The tract at residues 170–394 (DYVALRYSPA…LRESSPPRAT (225 aa)) is catalytic. Glutamine 197 serves as a coordination point for sulfate. ATP is bound by residues 197 to 200 (QTRN) and 291 to 294 (GRDH). Catalysis depends on residues threonine 198, arginine 199, and asparagine 200. Arginine 199 serves as a coordination point for sulfate. Alanine 295 contacts sulfate. Valine 333 is a binding site for ATP. Positions 395-574 (QGFTIFLTGY…LESEGYFDRL (180 aa)) are allosteric regulation domain; adenylyl-sulfate kinase-like. Residues 434–437 (DTVR), arginine 451, 477–478 (IA), and arginine 516 each bind 3'-phosphoadenylyl sulfate.

In the N-terminal section; belongs to the sulfate adenylyltransferase family. This sequence in the C-terminal section; belongs to the APS kinase family. In terms of assembly, homohexamer. Dimer of trimers.

The protein resides in the cytoplasm. The catalysed reaction is sulfate + ATP + H(+) = adenosine 5'-phosphosulfate + diphosphate. The protein operates within sulfur metabolism; hydrogen sulfide biosynthesis; sulfite from sulfate: step 1/3. Its activity is regulated as follows. Allosterically inhibited by 3'-phosphoadenosine 5'-phosphosulfate (PAPS). Its function is as follows. Catalyzes the first intracellular reaction of sulfate assimilation, forming adenosine-5'-phosphosulfate (APS) from inorganic sulfate and ATP. Plays an important role in sulfate activation as a component of the biosynthesis pathway of sulfur-containing amino acids. The sequence is that of Sulfate adenylyltransferase from Aspergillus terreus (strain NIH 2624 / FGSC A1156).